We begin with the raw amino-acid sequence, 388 residues long: Succinate--CoA ligase [ADP-forming] subunit beta (388 aa).

Positions 9–244 (KQLFARYGLP…QSQEDPREAQ (236 aa)) constitute an ATP-grasp domain. Residues Lys-46, 53 to 55 (GRG), Glu-99, Thr-102, and Glu-107 each bind ATP. Residues Asn-199 and Asp-213 each contribute to the Mg(2+) site. Residues Asn-264 and 321-323 (GIV) each bind substrate.

It belongs to the succinate/malate CoA ligase beta subunit family. Heterotetramer of two alpha and two beta subunits. Mg(2+) serves as cofactor.

The enzyme catalyses succinate + ATP + CoA = succinyl-CoA + ADP + phosphate. The catalysed reaction is GTP + succinate + CoA = succinyl-CoA + GDP + phosphate. Its pathway is carbohydrate metabolism; tricarboxylic acid cycle; succinate from succinyl-CoA (ligase route): step 1/1. Succinyl-CoA synthetase functions in the citric acid cycle (TCA), coupling the hydrolysis of succinyl-CoA to the synthesis of either ATP or GTP and thus represents the only step of substrate-level phosphorylation in the TCA. The beta subunit provides nucleotide specificity of the enzyme and binds the substrate succinate, while the binding sites for coenzyme A and phosphate are found in the alpha subunit. In Salmonella dublin (strain CT_02021853), this protein is Succinate--CoA ligase [ADP-forming] subunit beta.